A 487-amino-acid polypeptide reads, in one-letter code: MSLSTVNHAAAAAAAAGSGKSFSAAAPAAPSVRLPRTRAPAAAAVSAAAVGADRAADRVSALSQVSGVLGSQWGDEGKGKLVDVLAPRFDIVARCQGGANAGHTIYNSEGKKFALHLVPSGILHEGTLCVVGNGAVIHVPGFFNEIDGLESNGVNCNGRILVSDRAHLLFDLHQAVDGLREAELANSFIGTTKRGIGPCYSSKVTRNGLRVCDLRHMDTFGDKLDVLFKDAASRFEGFEYSKSMLREEVERYKRFAERLEPFIADTVHVLNESIQQKKKILVEGGQATMLDIDFGTYPFVTSSSPSAGGICTGLGIAPRCIGDLIGVVKAYTTRVGSGPFPTELFGEEGDLLRKSGMEFGTTTGRPRRCGWLDIVALKYCCEINGFSSLNLTKLDVLSGLPEVKLGVSYNQPDGQKLQSFPGDLDILEQVQVKYEVLPGWQSDISSVRSYSELPLAAQRYVERIEDLVGVPVHYIGVGPGRDALIYK.

A chloroplast-targeting transit peptide spans 1–46 (MSLSTVNHAAAAAAAAGSGKSFSAAAPAAPSVRLPRTRAPAAAAVS). Residues 74–80 (GDEGKGK) and 102–104 (GHT) contribute to the GTP site. The active-site Proton acceptor is the Asp-75. Mg(2+) is bound by residues Asp-75 and Gly-102. IMP-binding positions include 75–78 (DEGK), 100–103 (NAGH), Thr-192, Arg-206, Gln-286, Thr-301, and Arg-365. His-103 (proton donor) is an active-site residue. 361 to 367 (TTTGRPR) is a binding site for substrate. GTP-binding positions include Arg-367, 393 to 395 (KLD), and 476 to 478 (GVG).

This sequence belongs to the adenylosuccinate synthetase family. In terms of assembly, homodimer. The cofactor is Mg(2+).

The protein resides in the plastid. It is found in the chloroplast. It catalyses the reaction IMP + L-aspartate + GTP = N(6)-(1,2-dicarboxyethyl)-AMP + GDP + phosphate + 2 H(+). It participates in purine metabolism; AMP biosynthesis via de novo pathway; AMP from IMP: step 1/2. In terms of biological role, plays an important role in the de novo pathway and in the salvage pathway of purine nucleotide biosynthesis. Catalyzes the first committed step in the biosynthesis of AMP from IMP. The sequence is that of Adenylosuccinate synthetase, chloroplastic from Oryza sativa subsp. indica (Rice).